We begin with the raw amino-acid sequence, 182 residues long: ATP synthase subunit delta (182 aa).

It belongs to the ATPase delta chain family. F-type ATPases have 2 components, F(1) - the catalytic core - and F(0) - the membrane proton channel. F(1) has five subunits: alpha(3), beta(3), gamma(1), delta(1), epsilon(1). F(0) has three main subunits: a(1), b(2) and c(10-14). The alpha and beta chains form an alternating ring which encloses part of the gamma chain. F(1) is attached to F(0) by a central stalk formed by the gamma and epsilon chains, while a peripheral stalk is formed by the delta and b chains.

It is found in the cell membrane. Functionally, f(1)F(0) ATP synthase produces ATP from ADP in the presence of a proton or sodium gradient. F-type ATPases consist of two structural domains, F(1) containing the extramembraneous catalytic core and F(0) containing the membrane proton channel, linked together by a central stalk and a peripheral stalk. During catalysis, ATP synthesis in the catalytic domain of F(1) is coupled via a rotary mechanism of the central stalk subunits to proton translocation. In terms of biological role, this protein is part of the stalk that links CF(0) to CF(1). It either transmits conformational changes from CF(0) to CF(1) or is implicated in proton conduction. The chain is ATP synthase subunit delta from Lachnoclostridium phytofermentans (strain ATCC 700394 / DSM 18823 / ISDg) (Clostridium phytofermentans).